Consider the following 419-residue polypeptide: eIF5-mimic protein 1 (419 aa).

The segment at 1–22 (MNKHQKPVLTGQRFKTRKRDEK) is disordered. The residue at position 117 (K117) is an N6-acetyllysine. Positions 248–415 (VQQSLGTRKE…QNAEEESESE (168 aa)) constitute a W2 domain. Phosphoserine occurs at positions 412 and 414.

The protein belongs to the BZW family. As to quaternary structure, interacts with EIF3E, EIF2S2 and EIF3C.

Its subcellular location is the cytoplasm. In terms of biological role, translation initiation regulator which represses non-AUG initiated translation and repeat-associated non-AUG (RAN) initiated translation by acting as a competitive inhibitor of eukaryotic translation initiation factor 5 (EIF5) function. Increases the accuracy of translation initiation by impeding EIF5-dependent translation from non-AUG codons by competing with it for interaction with EIF2S2 within the 43S pre-initiation complex (PIC) in an EIF3C-binding dependent manner. The chain is eIF5-mimic protein 1 (BZW2) from Macaca fascicularis (Crab-eating macaque).